A 167-amino-acid chain; its full sequence is Small ribosomal subunit protein uS5 (167 aa).

The S5 DRBM domain occupies 12–75 (LQEKLIAVNR…EKARRNMVTV (64 aa)).

Belongs to the universal ribosomal protein uS5 family. Part of the 30S ribosomal subunit. Contacts proteins S4 and S8.

With S4 and S12 plays an important role in translational accuracy. Functionally, located at the back of the 30S subunit body where it stabilizes the conformation of the head with respect to the body. The sequence is that of Small ribosomal subunit protein uS5 from Shewanella oneidensis (strain ATCC 700550 / JCM 31522 / CIP 106686 / LMG 19005 / NCIMB 14063 / MR-1).